Here is a 62-residue protein sequence, read N- to C-terminus: MDINASKVDPKLLELLVCPLTKGRLSYDPEANELVSEKARLAYPIRDGVPIMLVSEARKIED.

The protein belongs to the UPF0434 family.

The polypeptide is UPF0434 protein R03186 (Rhizobium meliloti (strain 1021) (Ensifer meliloti)).